The sequence spans 202 residues: Adenosylcobalamin/alpha-ribazole phosphatase (202 aa).

The active-site Tele-phosphohistidine intermediate is H8. Catalysis depends on E81, which acts as the Proton donor/acceptor.

Belongs to the phosphoglycerate mutase family. As to quaternary structure, monomer.

It carries out the reaction adenosylcob(III)alamin 5'-phosphate + H2O = adenosylcob(III)alamin + phosphate. The catalysed reaction is alpha-ribazole 5'-phosphate + H2O = alpha-ribazole + phosphate. It functions in the pathway nucleoside biosynthesis; alpha-ribazole biosynthesis; alpha-ribazole from 5,6-dimethylbenzimidazole: step 2/2. Functionally, catalyzes the conversion of adenosylcobalamin 5'-phosphate to adenosylcobalamin (vitamin B12); involved in the assembly of the nucleotide loop of cobalamin. Also catalyzes the hydrolysis of the phospho group from alpha-ribazole 5'-phosphate to form alpha-ribazole. The protein is Adenosylcobalamin/alpha-ribazole phosphatase (cobC) of Salmonella typhimurium (strain LT2 / SGSC1412 / ATCC 700720).